The sequence spans 309 residues: Carboxylesterase Culp6 homolog (309 aa).

The chain crosses the membrane as a helical span at residues 5–25 (ITVIAVLIVLALIGVGIVQYV). Cys55 and Cys146 are oxidised to a cystine. Active-site residues include Ser157, Asp253, and His279. Cys249 and Cys256 are joined by a disulfide.

The protein belongs to the cutinase family.

Its subcellular location is the cell membrane. The catalysed reaction is a butanoate ester + H2O = an aliphatic alcohol + butanoate + H(+). With respect to regulation, inhibited by tetrahydrolipstatin (THL), a specific lipase inhibitor. Functionally, esterase that may be involved in cell wall biosynthesis and/or maintenance. Hydrolyzes pNP-butyrate (C4). The chain is Carboxylesterase Culp6 homolog from Corynebacterium glutamicum (strain ATCC 13032 / DSM 20300 / JCM 1318 / BCRC 11384 / CCUG 27702 / LMG 3730 / NBRC 12168 / NCIMB 10025 / NRRL B-2784 / 534).